Consider the following 530-residue polypeptide: Ubiquitin carboxyl-terminal hydrolase 17-like protein 18 (530 aa).

The region spanning 80–375 is the USP domain; it reads AGLQNMGNTC…QAYVLFYIQK (296 aa). Cys89 (nucleophile) is an active-site residue. The Proton acceptor role is filled by His334. 2 stretches are compositionally biased toward basic and acidic residues: residues 382-392 and 398-413; these read SESVSRGREPR and DTDR…RDHP. 2 disordered regions span residues 382 to 414 and 509 to 530; these read SESV…DHPC and RGRA…LVCQ. Over residues 510–524 the composition is skewed to basic residues; it reads GRARRSKGKNKHSKR.

This sequence belongs to the peptidase C19 family. USP17 subfamily.

The protein localises to the nucleus. The protein resides in the endoplasmic reticulum. It carries out the reaction Thiol-dependent hydrolysis of ester, thioester, amide, peptide and isopeptide bonds formed by the C-terminal Gly of ubiquitin (a 76-residue protein attached to proteins as an intracellular targeting signal).. Deubiquitinating enzyme that removes conjugated ubiquitin from specific proteins to regulate different cellular processes that may include cell proliferation, progression through the cell cycle, apoptosis, cell migration, and the cellular response to viral infection. In Homo sapiens (Human), this protein is Ubiquitin carboxyl-terminal hydrolase 17-like protein 18 (USP17L18).